Consider the following 256-residue polypeptide: CCAAT/enhancer-binding protein delta (256 aa).

Ser-2 bears the N-acetylserine mark. Disordered stretches follow at residues 18-40 (TAEP…AEPA), 92-121 (GGPA…APGS), and 139-206 (AAAQ…NQEM). Lys-108 participates in a covalent cross-link: Glycyl lysine isopeptide (Lys-Gly) (interchain with G-Cter in SUMO). The segment covering 143–162 (PTPPASPEPPRRSPAPPAPG) has biased composition (pro residues). The segment covering 164 to 188 (ARDKAAGKRGPDRGSPEYRQRRERN) has biased composition (basic and acidic residues). The region spanning 178-241 (SPEYRQRRER…AGLRRFFKQL (64 aa)) is the bZIP domain. Residues 182-209 (RQRRERNNIAVRKSRDKAKRRNQEMQQK) are basic motif. Residues 213–241 (LSAENEKLQQRVEQLTRDLAGLRRFFKQL) form a leucine-zipper region.

The protein belongs to the bZIP family. C/EBP subfamily. Binds DNA as a homodimer and as a heterodimer. Can form stable heterodimers with CEBPB. Can form stable heterodimers with CEBPA and CEBPE. Directly interacts with SPI1/PU.1; this interaction does not affect DNA-binding properties of each partner. Interacts with PRDM16.

It is found in the nucleus. Its function is as follows. Transcription activator that recognizes two different DNA motifs: the CCAAT homology common to many promoters and the enhanced core homology common to many enhancers. Important transcription factor regulating the expression of genes involved in immune and inflammatory responses. Transcriptional activator that enhances IL6 transcription alone and as heterodimer with CEBPB. The sequence is that of CCAAT/enhancer-binding protein delta (CEBPD) from Bos taurus (Bovine).